The chain runs to 86 residues: uncharacterized protein (86 aa).

The next 3 membrane-spanning stretches (helical) occupy residues 4-24 (ILII…IAAV), 34-54 (MGLV…ILIN), and 64-84 (DIAY…ARVL).

This sequence to M.jannaschii MJ1223.

It is found in the cell membrane. This is an uncharacterized protein from Methanothermobacter thermautotrophicus (strain ATCC 29096 / DSM 1053 / JCM 10044 / NBRC 100330 / Delta H) (Methanobacterium thermoautotrophicum).